A 675-amino-acid polypeptide reads, in one-letter code: Mitochondrial distribution and morphology protein 12 (675 aa).

The 675-residue stretch at 1-675 folds into the SMP-LTD domain; that stretch reads MSIDLNWDTV…VYPSFWTFLV (675 aa). Disordered stretches follow at residues 66 to 186, 241 to 270, 307 to 327, 365 to 390, and 444 to 517; these read LPDF…GTNH, GPSW…GAGG, GTGK…PLGT, TGPR…VAPA, and PKQG…RFRE. The segment covering 78–101 has biased composition (acidic residues); it reads SSEESDSEEEVAYENEGEYLDDPV. Low complexity predominate over residues 123–137; the sequence is NSSTGSRNGSGPNSG. The segment covering 261–270 has biased composition (gly residues); sequence GGAGGGGAGG. A compositionally biased stretch (low complexity) spans 317–327; the sequence is PLTGTSTPLGT. Polar residues-rich tracts occupy residues 373–382 and 454–469; these read PSSQSLNSVG and VSTL…NNRA. The segment covering 497-510 has biased composition (acidic residues); it reads EPEEDEEEEEEGEE.

This sequence belongs to the MDM12 family. As to quaternary structure, component of the ER-mitochondria encounter structure (ERMES) or MDM complex, composed of mmm-1, mdm10, mdm12 and mdm34. A mmm-1 homodimer associates with one molecule of mdm12 on each side in a pairwise head-to-tail manner, and the SMP-LTD domains of mmm-1 and mdm12 generate a continuous hydrophobic tunnel for phospholipid trafficking.

Its subcellular location is the mitochondrion outer membrane. It is found in the endoplasmic reticulum membrane. Component of the ERMES/MDM complex, which serves as a molecular tether to connect the endoplasmic reticulum (ER) and mitochondria. Components of this complex are involved in the control of mitochondrial shape and protein biogenesis, and function in nonvesicular lipid trafficking between the ER and mitochondria. Mdm12 is required for the interaction of the ER-resident membrane protein MMM1 and the outer mitochondrial membrane-resident beta-barrel protein mdm10. The mdm12-mmm-1 subcomplex functions in the major beta-barrel assembly pathway that is responsible for biogenesis of all mitochondrial outer membrane beta-barrel proteins, and acts in a late step after the SAM complex. The mdm10-mdm12-mmm-1 subcomplex further acts in the TOM40-specific pathway after the action of the mdm12-mmm1 complex. Essential for establishing and maintaining the structure of mitochondria and maintenance of mtDNA nucleoids. The protein is Mitochondrial distribution and morphology protein 12 of Neurospora crassa (strain ATCC 24698 / 74-OR23-1A / CBS 708.71 / DSM 1257 / FGSC 987).